A 572-amino-acid polypeptide reads, in one-letter code: Hemagglutinin-neuraminidase (572 aa).

At 1–31 (MEYWKHTNHRKDAGNELETSMATHGNKLTNK) the chain is on the intravirion side. Residues 32 to 52 (ITYILWTIILVLLSIVLIIVL) traverse the membrane as a helical segment. The Virion surface portion of the chain corresponds to 53-572 (INSIKSEKAH…FKTEVPKSCS (520 aa)). Cystine bridges form between Cys-190–Cys-214 and Cys-256–Cys-269. The interval 252 to 257 (NRKSCS) is involved in neuraminidase activity. Residues Asn-308 and Asn-351 are each glycosylated (N-linked (GlcNAc...) asparagine; by host). 2 disulfides stabilise this stretch: Cys-355-Cys-469 and Cys-463-Cys-473. N-linked (GlcNAc...) asparagine; by host glycosylation is present at Asn-523. Cysteines 535 and 544 form a disulfide.

Belongs to the paramyxoviruses hemagglutinin-neuraminidase family. In terms of assembly, homotetramer; composed of disulfide-linked homodimers. Interacts with F protein trimer.

The protein localises to the virion membrane. Its subcellular location is the host cell membrane. It carries out the reaction Hydrolysis of alpha-(2-&gt;3)-, alpha-(2-&gt;6)-, alpha-(2-&gt;8)- glycosidic linkages of terminal sialic acid residues in oligosaccharides, glycoproteins, glycolipids, colominic acid and synthetic substrates.. In terms of biological role, attaches the virus to sialic acid-containing cell receptors and thereby initiating infection. Binding of HN protein to the receptor induces a conformational change that allows the F protein to trigger virion/cell membranes fusion. Its function is as follows. Neuraminidase activity ensures the efficient spread of the virus by dissociating the mature virions from the neuraminic acid containing glycoproteins. The sequence is that of Hemagglutinin-neuraminidase (HN) from Human parainfluenza 3 virus (strain Tex/9305/82) (HPIV-3).